A 241-amino-acid polypeptide reads, in one-letter code: Ribonuclease HII (241 aa).

An RNase H type-2 domain is found at 57-241 (NFIAGVDEAG…RTYVEKILKG (185 aa)). 3 residues coordinate a divalent metal cation: Asp-63, Glu-64, and Asp-155.

The protein belongs to the RNase HII family. Mn(2+) serves as cofactor. The cofactor is Mg(2+).

It localises to the cytoplasm. It catalyses the reaction Endonucleolytic cleavage to 5'-phosphomonoester.. Endonuclease that specifically degrades the RNA of RNA-DNA hybrids. This Caldanaerobacter subterraneus subsp. tengcongensis (strain DSM 15242 / JCM 11007 / NBRC 100824 / MB4) (Thermoanaerobacter tengcongensis) protein is Ribonuclease HII.